A 364-amino-acid polypeptide reads, in one-letter code: Glycerol dehydrogenase (364 aa).

Positions 37, 92, 93, 114, and 117 each coordinate NAD(+). D119 contributes to the glycerol binding site. NAD(+)-binding residues include S123, L125, and Y129. Glycerol-binding residues include D169, H252, and H269. Positions 169, 252, and 269 each coordinate Zn(2+).

Belongs to the iron-containing alcohol dehydrogenase family. Zn(2+) is required as a cofactor.

It carries out the reaction glycerol + NAD(+) = dihydroxyacetone + NADH + H(+). It functions in the pathway polyol metabolism; glycerol fermentation; glycerone phosphate from glycerol (oxidative route): step 1/2. Functionally, catalyzes the NAD-dependent oxidation of glycerol to dihydroxyacetone (glycerone). The sequence is that of Glycerol dehydrogenase (gldA) from Thermotoga maritima (strain ATCC 43589 / DSM 3109 / JCM 10099 / NBRC 100826 / MSB8).